We begin with the raw amino-acid sequence, 715 residues long: Interferon-induced GTP-binding protein Mx2 (715 aa).

Residues 115-387 (DLALPAIAVI…LIMHIQKSLP (273 aa)) enclose the Dynamin-type G domain. The interval 125-132 (GDQSSGKS) is G1 motif. 125 to 132 (GDQSSGKS) is a binding site for GTP. Residues 150-152 (VTR) form a G2 motif region. Positions 225–228 (DLPG) are G3 motif. Residues 225–229 (DLPGI) and 294–297 (TKPD) contribute to the GTP site. The interval 294–297 (TKPD) is G4 motif. The interval 326-329 (KCRG) is G5 motif. One can recognise a GED domain in the interval 623-714 (FTEIGIHLNA…ALCQFSSKEI (92 aa)).

The protein belongs to the TRAFAC class dynamin-like GTPase superfamily. Dynamin/Fzo/YdjA family.

The protein resides in the cytoplasm. The protein localises to the nucleus. It is found in the nuclear pore complex. Its function is as follows. Interferon-induced dynamin-like GTPase with potent antiviral activity against human immunodeficiency virus type 1 (HIV-1). Acts by targeting the viral capsid and affects the nuclear uptake and/or stability of the HIV-1 replication complex and the subsequent chromosomal integration of the proviral DNA. Exhibits antiviral activity also against simian immunodeficiency virus (SIV-mnd). May play a role in regulating nucleocytoplasmic transport and cell-cycle progression. The protein is Interferon-induced GTP-binding protein Mx2 (MX2) of Homo sapiens (Human).